The primary structure comprises 310 residues: Aminoacyl tRNA synthase complex-interacting multifunctional protein 1 (310 aa).

N-acetylalanine is present on A2. Residues 6–46 (AVLKRLEQKGAEADQIIEYLKQQVALLKEKAILQATMREEK) are required for fibroblast proliferation. Residues 54-192 (KLKKEIEELK…APRTVVSGLV (139 aa)) are interaction with HSP90B1. Polar residues predominate over residues 92-110 (ASESVVQSPSVATTASPAT). The tract at residues 92–147 (ASESVVQSPSVATTASPATKEQIKAGEEKKVKEKTEKKGEKKEKQQSAAASTDSKP) is disordered. A required for endothelial cell death region spans residues 101 to 115 (SVATTASPATKEQIK). Residues 112 to 136 (EQIKAGEEKKVKEKTEKKGEKKEKQ) show a composition bias toward basic and acidic residues. The required for endothelial cell migration stretch occupies residues 115–190 (KAGEEKKVKE…EAAPRTVVSG (76 aa)). A Phosphoserine modification is found at S138. In terms of domain architecture, tRNA-binding spans 149 to 250 (DASRLDLRIG…NGSVPGDRIT (102 aa)). K267 bears the N6-succinyllysine mark.

Homodimer. Part of the multisynthetase complex (MSC), a multisubunit complex that groups tRNA ligases for Arg (RARS1), Asp (DARS1), Gln (QARS1), Ile (IARS1), Leu (LARS1), Lys (KARS1), Met (MARS1) the bifunctional ligase for Glu and Pro (EPRS1) and the auxiliary subunits AIMP1/p43, AIMP2/p38 and EEF1E1/p18. Interacts (via N-terminus) with RARS1 (via N-terminus). Part of a complex composed of RARS1, QARS1 and AIMP1. Interacts (via C-terminus) with SMURF2. Interacts (via N-terminus) with HSP90B1/gp96 (via C-terminus). Interacts with PSMA7. Interacts with TARS3. Post-translationally, cleaved by caspase-7 in response to apoptosis to produce EMAP-II. Highly expressed in salivary glands and pancreatic alpha cells in the adult (at protein level). In the embryo, expressed primarily at sites of tissue remodeling such as ganglia, developing bones and teeth.

The protein resides in the nucleus. The protein localises to the cytoplasm. It is found in the cytosol. It localises to the secreted. Its subcellular location is the endoplasmic reticulum. The protein resides in the golgi apparatus. In terms of biological role, non-catalytic component of the multisynthase complex. Stimulates the catalytic activity of cytoplasmic arginyl-tRNA synthase. Binds tRNA. Possesses inflammatory cytokine activity. Negatively regulates TGF-beta signaling through stabilization of SMURF2 by binding to SMURF2 and inhibiting its SMAD7-mediated degradation. Involved in glucose homeostasis through induction of glucagon secretion at low glucose levels. Promotes dermal fibroblast proliferation and wound repair. Regulates KDELR1-mediated retention of HSP90B1/gp96 in the endoplasmic reticulum. Plays a role in angiogenesis by inducing endothelial cell migration at low concentrations and endothelian cell apoptosis at high concentrations. Induces maturation of dendritic cells and monocyte cell adhesion. Modulates endothelial cell responses by degrading HIF-1A through interaction with PSMA7. The protein is Aminoacyl tRNA synthase complex-interacting multifunctional protein 1 (Aimp1) of Mus musculus (Mouse).